A 757-amino-acid chain; its full sequence is Polyribonucleotide nucleotidyltransferase (757 aa).

Mg(2+) is bound by residues D525 and D531. The KH domain occupies 591-650 (PRVISVNIPVDKIGELIGPKGKTINAIQDETGADISIEEDGAVYIGAVDGPSAEAARAQV). One can recognise an S1 motif domain in the interval 662 to 734 (GESFLGTVVK…DRGKLSLAPV (73 aa)). The interval 736-757 (EEAADQEGSAAASDGPEAPAEG) is disordered.

It belongs to the polyribonucleotide nucleotidyltransferase family. Mg(2+) serves as cofactor.

It localises to the cytoplasm. The enzyme catalyses RNA(n+1) + phosphate = RNA(n) + a ribonucleoside 5'-diphosphate. Functionally, involved in mRNA degradation. Catalyzes the phosphorolysis of single-stranded polyribonucleotides processively in the 3'- to 5'-direction. This chain is Polyribonucleotide nucleotidyltransferase, found in Clavibacter sepedonicus (Clavibacter michiganensis subsp. sepedonicus).